Consider the following 452-residue polypeptide: Membrane-bound acylglycerophosphatidylinositol O-acyltransferase mboa-7 (452 aa).

4 consecutive transmembrane segments (helical) span residues 4 to 24, 53 to 73, 79 to 99, and 104 to 124; these read IIGL…FSFA, PRIA…AFAP, FYVF…HYFL, and VASH…GITF. An N-linked (GlcNAc...) asparagine glycan is attached at Asn137. The next 3 helical transmembrane spans lie at 153-173, 220-240, and 244-264; these read FAYF…YQML, AIWE…FVVF, and VYSA…GIYP. N-linked (GlcNAc...) asparagine glycosylation occurs at Asn319. His350 is an active-site residue. A helical membrane pass occupies residues 354 to 374; the sequence is AGYFMSFGVVAMCAILEDVIF. An N-linked (GlcNAc...) asparagine glycan is attached at Asn414. Residues 421-441 form a helical membrane-spanning segment; the sequence is FWSSIYYWLPLLCVPFYIYSV.

Belongs to the membrane-bound acyltransferase family.

The protein localises to the membrane. The enzyme catalyses a 1-acyl-sn-glycero-3-phospho-(1D-myo-inositol) + an acyl-CoA = a 1,2-diacyl-sn-glycero-3-phospho-(1D-myo-inositol) + CoA. It carries out the reaction a fatty acyl-[ACP] + a 1-acyl-sn-glycero-3-phosphate = a 1,2-diacyl-sn-glycero-3-phosphate + holo-[ACP]. It functions in the pathway lipid metabolism; phospholipid metabolism. Functionally, acyltransferase which mediates the conversion of lysophosphatidylinositol (1-acylglycerophosphatidylinositol or LPI) into phosphatidylinositol (1,2-diacyl-sn-glycero-3-phosphoinositol or PI) (LPIAT activity). Prefers arachidonoyl-CoA or eicosapentaenoic acid (EPA) as the acyl donor. Prefers sn-2-LPI rather than sn-1-LPI as the acyl acceptor. Lysophospholipid acyltransferases (LPLATs) catalyze the reacylation step of the phospholipid remodeling pathway also known as the Lands cycle. The polypeptide is Membrane-bound acylglycerophosphatidylinositol O-acyltransferase mboa-7 (Caenorhabditis briggsae).